A 380-amino-acid chain; its full sequence is Coiled-coil domain-containing protein 74B (380 aa).

3 disordered regions span residues 1 to 51, 89 to 108, and 128 to 202; these read MSGA…KRNL, LIMN…HLSR, and GGPS…DVPQ. Residues 34–44 show a composition bias toward polar residues; that stretch reads LRPQSPQLRQS. Residues 47 to 93 are a coiled coil; that stretch reads QKRNLDLEKSLQFLQQQHSEMLAKLHEEIEHLKRENKDLRYKLIMNQ. The span at 141 to 151 shows a compositional bias: basic residues; it reads RTHRPGGKHGR. Residues 165-182 show a composition bias toward polar residues; the sequence is DSLSTSSFQSVKSISNSG.

This chain is Coiled-coil domain-containing protein 74B (CCDC74B), found in Homo sapiens (Human).